Reading from the N-terminus, the 707-residue chain is Transcription factor 12 (707 aa).

Residues 25-109 are disordered; sequence AMFSPPVNSG…TPFMNSNLIG (85 aa). Polar residues-rich tracts occupy residues 30-48 and 56-76; these read PVNS…QFSG and GTTS…SRGF. S47, S67, and S79 each carry phosphoserine. The span at 81-93 shows a compositional bias: basic and acidic residues; sequence HYSDHLNDSRLGT. S98 is modified (phosphoserine). Residue K110 forms a Glycyl lysine isopeptide (Lys-Gly) (interchain with G-Cter in SUMO2) linkage. Phosphoserine is present on residues S116 and S124. Residues 119–140 are leucine-zipper; it reads LYSRDSGLSGCQSSLLRQDLGL. Disordered regions lie at residues 140–222 and 249–313; these read LGSP…SMFA and FGGI…ASHT. A compositionally biased stretch (polar residues) spans 144–163; it reads AQLSSSGKPGTPYYSFSATS. K181 participates in a covalent cross-link: Glycyl lysine isopeptide (Lys-Gly) (interchain with G-Cter in SUMO2). A compositionally biased stretch (low complexity) spans 256–269; that stretch reads STSHMSQSSSYGSL. The span at 282–306 shows a compositional bias: polar residues; sequence VSPTDINTSLPPMSSFHRGSTSSSP. T313 is subject to Phosphothreonine. S333 is modified (phosphoserine). Disordered regions lie at residues 349 to 393 and 521 to 605; these read PDHT…YENS and HKTP…ERRM. Residues 352-363 are compositionally biased toward low complexity; the sequence is TSSSFPSNPSTP. 2 stretches are compositionally biased toward polar residues: residues 364–377 and 384–393; these read VGSP…TSQW and APSSPSYENS. 2 stretches are compositionally biased toward basic and acidic residues: residues 543–555 and 561–576; these read IKTE…ENLH and DDMK…DIKV. A Glycyl lysine isopeptide (Lys-Gly) (interchain with G-Cter in SUMO2) cross-link involves residue K544. S565 is modified (phosphoserine). A Glycyl lysine isopeptide (Lys-Gly) (interchain with G-Cter in SUMO2) cross-link involves residue K575. T582 is modified (phosphothreonine). A phosphoserine mark is found at S583 and S584. Residues 593–605 show a composition bias toward basic and acidic residues; it reads PEQKIEREKERRM. Residues 602 to 655 enclose the bHLH domain; it reads ERRMANNARERLRVRDINEAFKELGRMCQLHLKSEKPQTKLLILHQAVAVILSL. Residues K634 and K678 each participate in a glycyl lysine isopeptide (Lys-Gly) (interchain with G-Cter in SUMO2) cross-link. The interval 657-680 is class A specific domain; the sequence is QQVRERNLNPKAACLKRREEEKVS. The segment at 675-707 is disordered; the sequence is EEEKVSAASAEPPTTLPGTHPGLSETTNPMGHL. Residues 686–697 show a composition bias toward low complexity; sequence PPTTLPGTHPGL. The segment covering 698-707 has biased composition (polar residues); the sequence is SETTNPMGHL.

As to quaternary structure, efficient DNA binding requires dimerization with another bHLH protein. Forms homo- or heterooligomers with myogenin, E12 and ITF2 proteins. Interacts with PTF1. Interacts with RUNX1T1. Interacts with NEUROD2. Interacts with BHLHA9. Isoform gamma is highly expressed in lung, kidney, spleen, and is expressed at reduced levels in heart, muscle, liver, pituitary, brain and the trigeminal ganglion. The expression of isoform alpha predominates over isoform gamma in the pituitary and the brain.

It is found in the nucleus. Transcriptional regulator. Involved in the initiation of neuronal differentiation. Activates transcription by binding to the E box (5'-CANNTG-3'). May be involved in the functional network that regulates the development of the GnRH axis. This chain is Transcription factor 12 (Tcf12), found in Rattus norvegicus (Rat).